Consider the following 97-residue polypeptide: Large ribosomal subunit protein eL21 (97 aa).

Residues 1 to 24 (MVQKPHSFRRKTRKKLRKHPRRRG) show a composition bias toward basic residues. Residues 1–25 (MVQKPHSFRRKTRKKLRKHPRRRGL) form a disordered region.

This sequence belongs to the eukaryotic ribosomal protein eL21 family.

In Pyrococcus horikoshii (strain ATCC 700860 / DSM 12428 / JCM 9974 / NBRC 100139 / OT-3), this protein is Large ribosomal subunit protein eL21 (rpl21e).